The primary structure comprises 405 residues: MEEDNQEIQRDNVGSSSFFKTCFNALNALSGIGILSVPYSLARGGWLSLSLLLLLAVTAFYTSLLITKCMNADRNIKTYPDIGERAFGRPGRIIVSVFMHLELYLVTTGFLILEGDNLHNLFPGFTIEMIGLRLNGKQAFMATVAFVIMPTLWWDNLSVLSYVSMSGVLATTVTLGSISWIGAFDGIGFHQKGKLINWSGIPTALSLYAFCYGAHPVLPTLYSSMKSKHQFNNVLLICFILCTIGYTSMAVLGYLMYGSQTLSQITLNLPIHKTSSKVAIYTTLVNPVAKYALMITPTVNTIKDWFPSRYSKKAYLHLLISTFFIISSVVIAETLPFFGYMMSLVGALLSVTVSILLPCLCYLKIFGNYKKIGCETIMLFGMVVMSVFVGVIGTYIALRDIIGSV.

Transmembrane regions (helical) follow at residues 22–42 (CFNA…YSLA), 46–66 (WLSL…SLLI), 93–113 (IIVS…FLIL), 140–160 (FMAT…LSVL), 169–189 (LATT…GIGF), 201–221 (IPTA…LPTL), 234–254 (VLLI…VLGY), 278–298 (VAIY…ITPT), 318–338 (LLIS…LPFF), 343–363 (SLVG…LCYL), and 377–397 (IMLF…TYIA).

The protein belongs to the amino acid/polyamine transporter 2 family. Amino acid/auxin permease (AAAP) (TC 2.A.18.5) subfamily.

The protein localises to the membrane. This Arabidopsis thaliana (Mouse-ear cress) protein is Amino acid transporter AVT1I.